A 100-amino-acid polypeptide reads, in one-letter code: EKC/KEOPS complex subunit GON7 (100 aa).

Residue methionine 1 is modified to N-acetylmethionine. The segment at 50 to 100 (SPVQGEAQDRVAAAPEEALDGDDEDDAEDENNIDNRTNSDGPTAKRPKPPS) is disordered. The segment covering 66-81 (EALDGDDEDDAEDENN) has biased composition (acidic residues).

As to quaternary structure, component of the EKC/KEOPS complex composed of at least GON7, TP53RK, TPRKB, OSGEP and LAGE3; the whole complex dimerizes.

It is found in the nucleus. Functionally, component of the EKC/KEOPS complex that is required for the formation of a threonylcarbamoyl group on adenosine at position 37 (t(6)A37) in tRNAs that read codons beginning with adenine. The complex is probably involved in the transfer of the threonylcarbamoyl moiety of threonylcarbamoyl-AMP (TC-AMP) to the N6 group of A37. GON7 plays a supporting role to the catalytic subunit OSGEP in the complex. The protein is EKC/KEOPS complex subunit GON7 of Sus scrofa (Pig).